A 1278-amino-acid chain; its full sequence is Sterol regulatory element-binding protein cleavage-activating protein (1278 aa).

Residues 1–18 (MTLTERLREKISQAFYNH) are Cytoplasmic-facing. The chain crosses the membrane as a helical span at residues 19–39 (GLFCASYPIPIILFTGLCILA). At 40–279 (CCYPLLKLPL…SLVHVHFKEE (240 aa)) the chain is on the lumenal side. Residues 46–284 (KLPLPGTGPV…HFKEEIGIAE (239 aa)) form a loop-1 region. Residues 60–80 (PVKDYSPPPLTSDHKPGEPNE) form a disordered region. N-linked (GlcNAc...) asparagine glycosylation is present at asparagine 263. A helical membrane pass occupies residues 280–300 (IGIAELIPLVTTYIILFAYIY). One can recognise an SSD domain in the interval 284 to 442 (ELIPLVTTYI…MLFFTTVLSI (159 aa)). Residues 301–312 (FSTRKIDMVKSK) are Cytoplasmic-facing. Residues 313-333 (WGLALAAVVTVLSSLLMSVGL) traverse the membrane as a helical segment. Residues 334 to 344 (CTLFGLTPTLN) lie on the Lumenal side of the membrane. The helical transmembrane segment at 345–365 (GGEIFPYLVVVIGLENVLVLT) threads the bilayer. Over 366-401 (KSVVSTPVDLEVKLRIAQGLSSESWSIMKNMATELG) the chain is Cytoplasmic. The helical transmembrane segment at 402 to 422 (IVLIGYFTLVPAIQEFCLFAV) threads the bilayer. A topological domain (lumenal) is located at residue valine 423. A helical membrane pass occupies residues 424 to 444 (GLVSDFFLQMLFFTTVLSIDI). The Cytoplasmic segment spans residues 445 to 518 (RRMELADLNK…FLARTRLAQR (74 aa)). The ER export signal signature appears at 447–452 (MELADL). Residues lysine 454 and lysine 466 each participate in a glycyl lysine isopeptide (Lys-Gly) (interchain with G-Cter in ubiquitin) cross-link. Residues 519–539 (LIMAGTVVWIGILVYTDPAGL) traverse the membrane as a helical segment. Positions 535–710 (DPAGLRTYLA…QAQRDLTLYK (176 aa)) are loop-7. Topologically, residues 540–707 (RTYLAAQVTE…GTAQAQRDLT (168 aa)) are lumenal. The segment at 581–618 (PPDASKLPENQTLPGEPPEPGGLAEGVHDSPAPEVTWG) is disordered. Asparagine 590 and asparagine 641 each carry an N-linked (GlcNAc...) asparagine glycan. Residues 668–696 (EGRHPQDGRSAWPPPRPGQGGLWEAGPKG) form a disordered region. A helical membrane pass occupies residues 708-728 (LYKVAALGLASGIVLVLLLLC). Residues 729 to 1278 (LYRVLCPRNY…YVPSVLEKLD (550 aa)) are Cytoplasmic-facing. The tract at residues 731–1278 (RVLCPRNYGQ…YVPSVLEKLD (548 aa)) is interaction with SREBF2. The WD 1 repeat unit spans residues 771–811 (VLRGHLMDIECLASDGMLLVSCCLAGHVCVWDAQTGDCLTR). A phosphoserine mark is found at serine 821, serine 837, serine 850, serine 905, and serine 935. The segment at 834 to 904 (ERLSDGGKGG…RYRAGRRAQD (71 aa)) is disordered. WD repeat units lie at residues 951–1001 (PPEK…LRCS) and 1004–1041 (EVSS…ALSP). Arginine 1050 carries the post-translational modification Omega-N-methylarginine. WD repeat units follow at residues 1076–1113 (AHQK…CLFT), 1116–1154 (GHSG…RVSH), 1157–1194 (AHRG…KLYS), and 1196–1234 (QQDL…LLQT).

The protein belongs to the WD repeat SCAP family. As to quaternary structure, membrane region forms a homotetramer. Component of the SCAP-SREBP complex (composed of SCAP and SREBF1/SREBP1 or SREBF2/SREBP2); interacts with SREBF1/SREBP1 or SREBF2/SREBP2 through its C-terminal cytoplasmic domain. Forms a ternary complex with INSIG1 or INSIG2 through its transmembrane domains at high sterol concentrations. Interacts with PAQR3; the interaction anchors the SCAP-SREBP complex to the Golgi apparatus in low cholesterol conditions. Interacts with the SEC23-SEC24 complex in a SAR1-GTP-dependent manner through an ER export signal in its third cytoplasmic loop. Interacts with RNF139; the interaction inhibits the interaction of SCAP with SEC24B and hampering the ER to Golgi transport of the SCAP-SREBP complex. Interacts with SPRING1. Post-translationally, ubiquitinated at Lys-454 and Lys-466. RNF145 triggers ubiquitination of SCAP, likely inhibiting SCAP-SREBP complex transport to the Golgi apparatus and the subsequent processing/maturation of SREBF2/SREBP2.

Its subcellular location is the endoplasmic reticulum membrane. The protein localises to the golgi apparatus membrane. It is found in the cytoplasmic vesicle. The protein resides in the COPII-coated vesicle membrane. Functionally, escort protein required for cholesterol as well as lipid homeostasis. Regulates export of the SCAP-SREBP complex from the endoplasmic reticulum to the Golgi upon low cholesterol, thereby regulating the processing of sterol regulatory element-binding proteins (SREBPs) SREBF1/SREBP1 and SREBF2/SREBP2. At high sterol concentrations, formation of a ternary complex with INSIG (INSIG1 or INSIG2) leads to mask the ER export signal in SCAP, promoting retention of the complex in the endoplasmic reticulum. Low sterol concentrations trigger release of INSIG, a conformational change in the SSD domain of SCAP, unmasking of the ER export signal, promoting recruitment into COPII-coated vesicles and transport of the SCAP-SREBP to the Golgi: in the Golgi, SREBPs are then processed, releasing the transcription factor fragment of SREBPs from the membrane, its import into the nucleus and up-regulation of LDLR, INSIG1 and the mevalonate pathway. Binds cholesterol via its SSD domain. The chain is Sterol regulatory element-binding protein cleavage-activating protein from Bos taurus (Bovine).